A 391-amino-acid chain; its full sequence is Nuclear hormone receptor family member nhr-115 (391 aa).

A DNA-binding region (nuclear receptor) is located at residues 5-77; the sequence is LFPCQICGQN…IGMDASKFQY (73 aa). The NR C4-type zinc-finger motif lies at 8–28; it reads CQICGQNSHGTHFGIVSCRAC. Residues 41–65 form an NR C4-type; atypical zinc finger; that stretch reads ARKGCLTNFKDKGSCFCKPCRLRKC. An NR LBD domain is found at 130–388; sequence YLDHGCETPI…FSHPEMFDDS (259 aa).

This sequence belongs to the nuclear hormone receptor family.

The protein localises to the nucleus. Orphan nuclear receptor. The sequence is that of Nuclear hormone receptor family member nhr-115 (nhr-115) from Caenorhabditis elegans.